Consider the following 317-residue polypeptide: 17-beta-hydroxysteroid dehydrogenase type 6 (317 aa).

A signal peptide spans 1–17 (MWFYLVTLVGLYHLLRW). 33-57 (FITGCDSGFGNLLARQLDRRGMRVL) provides a ligand contact to NAD(+). Residues asparagine 71 and asparagine 161 are each glycosylated (N-linked (GlcNAc...) asparagine). Serine 164 is a substrate binding site. The active-site Proton acceptor is the tyrosine 176.

It belongs to the short-chain dehydrogenases/reductases (SDR) family. In terms of tissue distribution, detected in liver.

It is found in the microsome membrane. The protein localises to the early endosome membrane. The enzyme catalyses all-trans-retinol--[retinol-binding protein] + NAD(+) = all-trans-retinal--[retinol-binding protein] + NADH + H(+). It carries out the reaction all-trans-retinol + NAD(+) = all-trans-retinal + NADH + H(+). The catalysed reaction is androsterone + NAD(+) = 5alpha-androstan-3,17-dione + NADH + H(+). It catalyses the reaction testosterone + NAD(+) = androst-4-ene-3,17-dione + NADH + H(+). The enzyme catalyses 5alpha-androstane-3alpha,17beta-diol + NAD(+) = 17beta-hydroxy-5alpha-androstan-3-one + NADH + H(+). It carries out the reaction 17beta-estradiol + NAD(+) = estrone + NADH + H(+). The catalysed reaction is 17beta-estradiol + NADP(+) = estrone + NADPH + H(+). It catalyses the reaction 3alpha-hydroxy-5alpha-pregnan-20-one + NAD(+) = 5alpha-pregnane-3,20-dione + NADH + H(+). The enzyme catalyses 5alpha-androstane-3beta,17beta-diol + NAD(+) = 17beta-hydroxy-5alpha-androstan-3-one + NADH + H(+). It carries out the reaction 3beta-hydroxy-5alpha-androstan-17-one + NAD(+) = 5alpha-androstan-3,17-dione + NADH + H(+). With respect to regulation, inhibited by carbenoxolone and phenyl arsenoxide. Its function is as follows. NAD-dependent oxidoreductase with broad substrate specificity that shows both oxidative and reductive activity (in vitro). Has 17-beta-hydroxysteroid dehydrogenase activity towards various steroids (in vitro). Converts 5-alpha-androstan-3-alpha,17-beta-diol to androsterone and estradiol to estrone (in vitro). Has 3-alpha-hydroxysteroid dehydrogenase activity towards androsterone (in vitro). Has retinol dehydrogenase activity towards all-trans-retinol (in vitro). The chain is 17-beta-hydroxysteroid dehydrogenase type 6 (Hsd17b6) from Mus musculus (Mouse).